A 396-amino-acid chain; its full sequence is 1-deoxy-D-xylulose 5-phosphate reductoisomerase (396 aa).

Threonine 10, glycine 11, serine 12, isoleucine 13, and asparagine 123 together coordinate NADPH. Lysine 124 contacts 1-deoxy-D-xylulose 5-phosphate. Position 125 (glutamate 125) interacts with NADPH. Aspartate 149 is a binding site for Mn(2+). The 1-deoxy-D-xylulose 5-phosphate site is built by serine 150, glutamate 151, serine 185, and histidine 208. A Mn(2+)-binding site is contributed by glutamate 151. Glycine 214 lines the NADPH pocket. Positions 221, 226, 227, and 230 each coordinate 1-deoxy-D-xylulose 5-phosphate. Glutamate 230 contacts Mn(2+).

This sequence belongs to the DXR family. Mg(2+) serves as cofactor. Mn(2+) is required as a cofactor.

The enzyme catalyses 2-C-methyl-D-erythritol 4-phosphate + NADP(+) = 1-deoxy-D-xylulose 5-phosphate + NADPH + H(+). It functions in the pathway isoprenoid biosynthesis; isopentenyl diphosphate biosynthesis via DXP pathway; isopentenyl diphosphate from 1-deoxy-D-xylulose 5-phosphate: step 1/6. Functionally, catalyzes the NADPH-dependent rearrangement and reduction of 1-deoxy-D-xylulose-5-phosphate (DXP) to 2-C-methyl-D-erythritol 4-phosphate (MEP). The sequence is that of 1-deoxy-D-xylulose 5-phosphate reductoisomerase from Shewanella frigidimarina (strain NCIMB 400).